Reading from the N-terminus, the 229-residue chain is Protein N-lysine methyltransferase METTL21D (229 aa).

A2 bears the N-acetylalanine mark. Phosphoserine is present on S8. Residues W43, G75–G77, D96, W126, A143, and Y148 contribute to the S-adenosyl-L-methionine site.

Belongs to the methyltransferase superfamily. METTL21 family. Interacts with ALKBH6. Interacts with ASPSCR1 and UBXN6; interaction with ASPSCR1, but not with UBXN6, enhances VCP methylation.

It is found in the cytoplasm. The catalysed reaction is L-lysyl-[protein] + 3 S-adenosyl-L-methionine = N(6),N(6),N(6)-trimethyl-L-lysyl-[protein] + 3 S-adenosyl-L-homocysteine + 3 H(+). Functionally, protein N-lysine methyltransferase that specifically trimethylates 'Lys-315' of VCP/p97; this modification may decrease VCP ATPase activity. This Homo sapiens (Human) protein is Protein N-lysine methyltransferase METTL21D (VCPKMT).